Consider the following 340-residue polypeptide: MSEKNAYAKSGVDVEAGYEVVERIKKHVARTERAGVMGVLGGFGGMFDLSQTGVKEPVLVSGTDGVGTKLMLAIKYDKHDTIGQDCVAMCVNDIIAAGAEPLYFLDYIATGKNNPVKLEEVVSGVAEGCVQAGVALIGGETAEMPGMYGEDDYDLAGFAVGVAEKSQLIDGSKVKEGDILLGLASSGIHSNGYSLVRRVFADYTGKELLPELEGKQLKDVLLEPTRIYVRAALPLIKEELVNGIGHITGGGFIENVPRMFADDLTAEIDEDKVPVLPIFKALEKYGDIKHEEMFEIFNMGVGLMLAVSPENVNRVKELLDEPVYEIGRIIKKADDSVVIK.

It belongs to the AIR synthase family.

It is found in the cytoplasm. The enzyme catalyses 2-formamido-N(1)-(5-O-phospho-beta-D-ribosyl)acetamidine + ATP = 5-amino-1-(5-phospho-beta-D-ribosyl)imidazole + ADP + phosphate + H(+). Its pathway is purine metabolism; IMP biosynthesis via de novo pathway; 5-amino-1-(5-phospho-D-ribosyl)imidazole from N(2)-formyl-N(1)-(5-phospho-D-ribosyl)glycinamide: step 2/2. The protein is Phosphoribosylformylglycinamidine cyclo-ligase of Streptococcus pyogenes serotype M2 (strain MGAS10270).